Here is a 227-residue protein sequence, read N- to C-terminus: Calcium-binding protein 1 (227 aa).

Gly-2 is lipidated: N-myristoyl glycine. Cys-4 is lipidated: S-palmitoyl cysteine. 4 consecutive EF-hand domains span residues 82–117 (EEIE…MGYM), 136–153 (GHVD…KLLA), 159–194 (IGVK…LLGH), and 196–227 (VGHR…MMSR). Ca(2+)-binding residues include Asp-95, Asp-97, Asp-99, Tyr-101, and Asp-106. Ca(2+)-binding residues include Asp-172, Asn-174, Asp-176, and Glu-178. Residue Ser-180 is modified to Phosphoserine. Residues Glu-183, Asp-209, Asn-211, Asp-213, Arg-215, and Glu-220 each coordinate Ca(2+).

In terms of assembly, homodimer; when bound to calcium or magnesium. Interacts (via C-terminus) with ITPR1, ITPR2 and ITPR3. This binding is calcium dependent and the interaction correlates with calcium concentration. An additional calcium-independent interaction with the N-terminus of ITPR1 results in a decreased InsP(3) binding to the receptor. Interacts with CACNA1A (via C-terminal CDB motif) in the pre- and postsynaptic membranes. Interacts with CACNA1D and CACNA1C (via C-terminal C and IQ motifs). The binding to the C motif is calcium independent whereas the binding to IQ requires the presence of calcium and is mutually exclusive with calmodulin binding. Interacts with TRPC5 (via C-terminus). Interacts (via EF-hands 1 and 2) at microtubules with MAP1LC3B. Interacts with MYO1C. Interacts (via EF-hands 1 and 2) with NSMF (via the central NLS-containing motif region), the interaction occurs in a calcium dependent manner after synaptic NMDA receptor stimulation and prevents nuclear import of NSMF. Interacts with SPACA9 homolog. Phosphorylated. The phosphorylation regulates the activity. In terms of tissue distribution, expressed in the inner retina, specifically in amacrine cells and in cone OFF-bipolar cells (at protein level).

Its function is as follows. Modulates calcium-dependent activity of inositol 1,4,5-triphosphate receptors (ITPRs). Inhibits agonist-induced intracellular calcium signaling. Enhances inactivation and does not support calcium-dependent facilitation of voltage-dependent P/Q-type calcium channels. Causes calcium-dependent facilitation and inhibits inactivation of L-type calcium channels by binding to the same sites as calmodulin in the C-terminal domain of CACNA1C, but has an opposite effect on channel function. Suppresses the calcium-dependent inactivation of CACNA1D. Inhibits TRPC5 channels. Prevents NMDA receptor-induced cellular degeneration. Required for the normal transfer of light signals through the retina. The polypeptide is Calcium-binding protein 1 (Cabp1) (Mus musculus (Mouse)).